The chain runs to 917 residues: Isoleucine--tRNA ligase (917 aa).

The short motif at 59-69 (PYANGHIHIGH) is the 'HIGH' region element. Glutamate 569 serves as a coordination point for L-isoleucyl-5'-AMP. The short motif at 610 to 614 (KMSKS) is the 'KMSKS' region element. Lysine 613 provides a ligand contact to ATP. The Zn(2+) site is built by cysteine 890, cysteine 893, cysteine 905, and cysteine 908.

Belongs to the class-I aminoacyl-tRNA synthetase family. IleS type 1 subfamily. As to quaternary structure, monomer. Zn(2+) serves as cofactor.

Its subcellular location is the cytoplasm. It carries out the reaction tRNA(Ile) + L-isoleucine + ATP = L-isoleucyl-tRNA(Ile) + AMP + diphosphate. Catalyzes the attachment of isoleucine to tRNA(Ile). As IleRS can inadvertently accommodate and process structurally similar amino acids such as valine, to avoid such errors it has two additional distinct tRNA(Ile)-dependent editing activities. One activity is designated as 'pretransfer' editing and involves the hydrolysis of activated Val-AMP. The other activity is designated 'posttransfer' editing and involves deacylation of mischarged Val-tRNA(Ile). This chain is Isoleucine--tRNA ligase, found in Campylobacter jejuni subsp. jejuni serotype O:2 (strain ATCC 700819 / NCTC 11168).